The primary structure comprises 371 residues: MEVLTNQPTPNKTSGKSNNSAFFYFESCQPPFLAILLLLIAYTVILIMGIFGNLSLIIIIFKKQREAQNVTNILIANLSLSDILVCVMCIPFTVIYTLMDHWVFGNTMCKLTSYVQSVSVSVSIFSLVLIAIERYQLIVNPRGWKPRVAHAYWGIILIWLISLTLSIPLFLSYHLTNEPFHNLSLPTDIYTHQVACVEIWPSKLNQLLFSTSLFMLQYFVPLGFILICYLKIVLCLRKRTRQVDRRKENKSRLNENKRVNVMLISIVVTFGACWLPLNIFNVIFDWYHEMLMSCHHDLVFVVCHLIAMVSTCINPLFYGFLNKNFQKDLMMLIHHCWCGEPQESYENIAMSTMHTDESKGSLKLAHIPTGI.

The Extracellular portion of the chain corresponds to Met1–Pro31. N-linked (GlcNAc...) asparagine glycosylation is found at Asn11 and Asn18. A helical membrane pass occupies residues Phe32–Gly52. The Cytoplasmic portion of the chain corresponds to Asn53–Asp82. The helical transmembrane segment at Ile83–Val103 threads the bilayer. Residues Phe104–Leu111 lie on the Extracellular side of the membrane. A disulfide bridge links Cys109 with Cys196. Residues Thr112–Ile132 form a helical membrane-spanning segment. The Cytoplasmic portion of the chain corresponds to Glu133 to His150. A helical membrane pass occupies residues Ala151–Leu171. Residues Ser172 to Gln206 lie on the Extracellular side of the membrane. Asn182 is a glycosylation site (N-linked (GlcNAc...) asparagine). The chain crosses the membrane as a helical span at residues Leu207 to Ile227. The Cytoplasmic segment spans residues Cys228–Leu263. A helical transmembrane segment spans residues Ile264–Phe284. Residues Asp285–Asp297 are Extracellular-facing. Residues Leu298 to Tyr318 form a helical membrane-spanning segment. Residues Gly319–Ile371 lie on the Cytoplasmic side of the membrane. Cys336 carries the S-palmitoyl cysteine lipid modification.

This sequence belongs to the G-protein coupled receptor 1 family. Kidney and discrete regions of the hypothalamus including the suprachiasmatic nucleus, anterior hypothalamus, bed nucleus stria terminalis, and the ventromedial nucleus.

It is found in the cell membrane. Its function is as follows. Receptor for neuropeptide Y and peptide YY. The rank order of affinity of this receptor for pancreatic polypeptides is NPY = PYY &gt;= NPY (2-36) = [Leu-31, Pro-34] NPY &gt; NPY (13-36) &gt; PP. The activity of this receptor is mediated by G proteins that inhibits adenylate cyclase activity. The sequence is that of Neuropeptide Y receptor type 6 (Npy6r) from Mus musculus (Mouse).